The chain runs to 484 residues: mRNA decay activator protein ZFP36L2 (484 aa).

Residues Ser-57 and Ser-127 each carry the phosphoserine modification. The segment at 100 to 152 is disordered; sequence YGQLKEPSGGSGTALVTKESKFRDRSFSENGERSQHLLHLQQQQKGGSGSQIN. Residues 117-134 are compositionally biased toward basic and acidic residues; the sequence is KESKFRDRSFSENGERSQ. An RNA-binding motif is present at residues 155 to 160; that stretch reads RYKTEL. C3H1-type zinc fingers lie at residues 155–183 and 193–221; these read RYKT…HGFH and KYKT…HNAD. Residues 172-213 form an RNA-binding region; it reads YGEKCQFAHGFHELRSLTRHPKYKTELCRTFHTIGFCPYGPR. 2 disordered regions span residues 261–304 and 395–484; these read SLSF…SCSS and QQGL…ISDD. A compositionally biased stretch (pro residues) spans 401–418; the sequence is PAPPPAQPPAAPAPPSPP. A compositionally biased stretch (low complexity) spans 449-468; it reads YLSGSLSSGSLSGSESPSLD. Ser-480 and Ser-482 each carry phosphoserine; by RPS6KA1.

Associates with the cytoplasmic CCR4-NOT deadenylase to trigger ARE-containing mRNA deadenylation and decay processes. Interacts with CNOT7; this interaction is inhibited in response to phorbol 12-myristate 13-acetate (PMA) treatment in a p38 MAPK-dependent manner. Interacts with CNOT6L. In terms of processing, phosphorylated by RPS6KA1 at Ser-480 and Ser-482 upon phorbol 12-myristate 13-acetate (PMA) treatment; this phosphorylation results in dissociation of the CCR4-NOT-deadenylase complex and induces p38 MAPK-mediated stabilization of the low-density lipoprotein (LDL) receptor (LDLR) mRNA. Phosphorylation occurs during early preadipocyte differentiation. Expressed in preadipocytes and adipocytes (at protein level). Expressed at highest level in lymphoid tissues such as thymus, spleen, lung, uterus, ovary, small and large intestine, mammary gland, fat and bone marrow. Expressed at intermediate level in kidney, heart, adrenal, eye and fetal liver. Weakly expressed in brain, skeletal muscle and liver. Expressed through B lymphocyte development. Expressed in superior cervical ganglion (SCG) and dorsal root ganglion (DRG). Expressed in embryonic stem cells (ESCs). Expressed in oocytes.

The protein resides in the nucleus. Its subcellular location is the cytoplasm. Zinc-finger RNA-binding protein that destabilizes several cytoplasmic AU-rich element (ARE)-containing mRNA transcripts by promoting their poly(A) tail removal or deadenylation, and hence provide a mechanism for attenuating protein synthesis. Acts as a 3'-untranslated region (UTR) ARE mRNA-binding adapter protein to communicate signaling events to the mRNA decay machinery. Functions by recruiting the CCR4-NOT deadenylase complex and probably other components of the cytoplasmic RNA decay machinery to the bound ARE-containing mRNAs, and hence promotes ARE-mediated mRNA deadenylation and decay processes. Binds to 3'-UTR ARE of numerous mRNAs. Promotes ARE-containing mRNA decay of the low-density lipoprotein (LDL) receptor (LDLR) mRNA in response to phorbol 12-myristate 13-acetate (PMA) treatment in a p38 MAPK-dependent manner. Positively regulates early adipogenesis by promoting ARE-mediated mRNA decay of immediate early genes (IEGs). Plays a role in mature peripheral neuron integrity by promoting ARE-containing mRNA decay of the transcriptional repressor REST mRNA. Plays a role in ovulation and oocyte meiotic maturation by promoting ARE-mediated mRNA decay of the luteinizing hormone receptor LHCGR mRNA. Acts as a negative regulator of erythroid cell differentiation: promotes glucocorticoid-induced self-renewal of erythroid cells by binding mRNAs that are induced or highly expressed during terminal erythroid differentiation and promotes their degradation, preventing erythroid cell differentiation. In association with ZFP36L1 maintains quiescence on developing B lymphocytes by promoting ARE-mediated decay of several mRNAs encoding cell cycle regulators that help B cells progress through the cell cycle, and hence ensuring accurate variable-diversity-joining (VDJ) recombination process and functional immune cell formation. Together with ZFP36L1 is also necessary for thymocyte development and prevention of T-cell acute lymphoblastic leukemia (T-ALL) transformation by promoting ARE-mediated mRNA decay of the oncogenic transcription factor NOTCH1 mRNA. This Mus musculus (Mouse) protein is mRNA decay activator protein ZFP36L2.